The following is a 199-amino-acid chain: Puromycin N-acetyltransferase (199 aa).

The region spanning 6-198 is the N-acetyltransferase domain; that stretch reads PTVRLATRDD…RTWCMTRKPG (193 aa).

Its function is as follows. Detoxification of puromycin. The polypeptide is Puromycin N-acetyltransferase (pac) (Streptomyces alboniger).